A 443-amino-acid polypeptide reads, in one-letter code: Threonine/serine transporter TdcC (443 aa).

The next 11 helical transmembrane spans lie at 22-42 (TTWT…FFPI), 44-64 (AGFG…PIAF), 97-117 (GVVI…IYGV), 135-155 (ALNR…IIWF), 163-183 (VMSF…LSLI), 207-227 (ILVT…FSPI), 259-279 (ASIL…FALS), 319-339 (ASII…LGTL), 366-386 (LSMV…PNIL), 389-409 (IEAM…MYAI), and 422-442 (IDNV…VYKV).

Belongs to the amino acid/polyamine transporter 2 family. SdaC/TdcC subfamily.

It is found in the cell inner membrane. The enzyme catalyses L-threonine(in) + H(+)(in) = L-threonine(out) + H(+)(out). It catalyses the reaction L-serine(in) + H(+)(in) = L-serine(out) + H(+)(out). Involved in the import of threonine and serine into the cell, with the concomitant import of a proton (symport system). This chain is Threonine/serine transporter TdcC, found in Escherichia fergusonii (strain ATCC 35469 / DSM 13698 / CCUG 18766 / IAM 14443 / JCM 21226 / LMG 7866 / NBRC 102419 / NCTC 12128 / CDC 0568-73).